An 86-amino-acid chain; its full sequence is uncharacterized protein (86 aa).

This sequence to C.jejuni CJ0253.

This is an uncharacterized protein from Helicobacter pylori (strain ATCC 700392 / 26695) (Campylobacter pylori).